Here is a 239-residue protein sequence, read N- to C-terminus: Ubiquinone biosynthesis O-methyltransferase (239 aa).

4 residues coordinate S-adenosyl-L-methionine: Arg44, Gly63, Asp84, and Met128.

Belongs to the methyltransferase superfamily. UbiG/COQ3 family.

It catalyses the reaction a 3-demethylubiquinol + S-adenosyl-L-methionine = a ubiquinol + S-adenosyl-L-homocysteine + H(+). The catalysed reaction is a 3-(all-trans-polyprenyl)benzene-1,2-diol + S-adenosyl-L-methionine = a 2-methoxy-6-(all-trans-polyprenyl)phenol + S-adenosyl-L-homocysteine + H(+). It functions in the pathway cofactor biosynthesis; ubiquinone biosynthesis. O-methyltransferase that catalyzes the 2 O-methylation steps in the ubiquinone biosynthetic pathway. This is Ubiquinone biosynthesis O-methyltransferase from Xanthomonas campestris pv. campestris (strain 8004).